A 234-amino-acid polypeptide reads, in one-letter code: Leucyl/phenylalanyl-tRNA--protein transferase (234 aa).

It belongs to the L/F-transferase family.

The protein resides in the cytoplasm. It carries out the reaction N-terminal L-lysyl-[protein] + L-leucyl-tRNA(Leu) = N-terminal L-leucyl-L-lysyl-[protein] + tRNA(Leu) + H(+). The catalysed reaction is N-terminal L-arginyl-[protein] + L-leucyl-tRNA(Leu) = N-terminal L-leucyl-L-arginyl-[protein] + tRNA(Leu) + H(+). It catalyses the reaction L-phenylalanyl-tRNA(Phe) + an N-terminal L-alpha-aminoacyl-[protein] = an N-terminal L-phenylalanyl-L-alpha-aminoacyl-[protein] + tRNA(Phe). Functions in the N-end rule pathway of protein degradation where it conjugates Leu, Phe and, less efficiently, Met from aminoacyl-tRNAs to the N-termini of proteins containing an N-terminal arginine or lysine. In Shigella sonnei (strain Ss046), this protein is Leucyl/phenylalanyl-tRNA--protein transferase.